We begin with the raw amino-acid sequence, 226 residues long: Ribonuclease 3 (226 aa).

In terms of domain architecture, RNase III spans 6-128; that stretch reads INRLQRKLGY…LIGGVFLDSD (123 aa). Glu41 serves as a coordination point for Mg(2+). Residue Asp45 is part of the active site. 2 residues coordinate Mg(2+): Asp114 and Glu117. The active site involves Glu117. In terms of domain architecture, DRBM spans 155–225; sequence DPKTRLQEFL…AEQALIKLEL (71 aa).

It belongs to the ribonuclease III family. As to quaternary structure, homodimer. The cofactor is Mg(2+).

It is found in the cytoplasm. The catalysed reaction is Endonucleolytic cleavage to 5'-phosphomonoester.. Functionally, digests double-stranded RNA. Involved in the processing of primary rRNA transcript to yield the immediate precursors to the large and small rRNAs (23S and 16S). Processes some mRNAs, and tRNAs when they are encoded in the rRNA operon. Processes pre-crRNA and tracrRNA of type II CRISPR loci if present in the organism. This chain is Ribonuclease 3, found in Serratia proteamaculans (strain 568).